Here is a 264-residue protein sequence, read N- to C-terminus: Thymidylate synthase (264 aa).

R21 is a binding site for dUMP. Residue H51 coordinates (6R)-5,10-methylene-5,6,7,8-tetrahydrofolate. 126–127 contacts dUMP; that stretch reads RR. C146 acts as the Nucleophile in catalysis. DUMP is bound by residues 166 to 169, N177, and 207 to 209; these read RSAD and HLY. D169 contributes to the (6R)-5,10-methylene-5,6,7,8-tetrahydrofolate binding site. A263 serves as a coordination point for (6R)-5,10-methylene-5,6,7,8-tetrahydrofolate.

The protein belongs to the thymidylate synthase family. Bacterial-type ThyA subfamily. As to quaternary structure, homodimer.

It is found in the cytoplasm. The enzyme catalyses dUMP + (6R)-5,10-methylene-5,6,7,8-tetrahydrofolate = 7,8-dihydrofolate + dTMP. The protein operates within pyrimidine metabolism; dTTP biosynthesis. Catalyzes the reductive methylation of 2'-deoxyuridine-5'-monophosphate (dUMP) to 2'-deoxythymidine-5'-monophosphate (dTMP) while utilizing 5,10-methylenetetrahydrofolate (mTHF) as the methyl donor and reductant in the reaction, yielding dihydrofolate (DHF) as a by-product. This enzymatic reaction provides an intracellular de novo source of dTMP, an essential precursor for DNA biosynthesis. This chain is Thymidylate synthase, found in Ralstonia nicotianae (strain ATCC BAA-1114 / GMI1000) (Ralstonia solanacearum).